A 388-amino-acid polypeptide reads, in one-letter code: Probable ubiquitin-conjugating enzyme E2 L709 (388 aa).

The UBC core domain occupies 3-162 (NVHKRVIKDI…GNDLMVQKLF (160 aa)). Cys95 functions as the Glycyl thioester intermediate in the catalytic mechanism. The interval 195–388 (VEEKSAKTSK…SSKSSKTGKK (194 aa)) is disordered. Composition is skewed to acidic residues over residues 221 to 238 (SEEEENSDDDNTDSDSES) and 246 to 297 (DVVD…ESEE). The segment covering 310–388 (KTTTKSSSTK…SSKSSKTGKK (79 aa)) has biased composition (low complexity).

It belongs to the ubiquitin-conjugating enzyme family.

The enzyme catalyses S-ubiquitinyl-[E1 ubiquitin-activating enzyme]-L-cysteine + [E2 ubiquitin-conjugating enzyme]-L-cysteine = [E1 ubiquitin-activating enzyme]-L-cysteine + S-ubiquitinyl-[E2 ubiquitin-conjugating enzyme]-L-cysteine.. The protein operates within protein modification; protein ubiquitination. Its function is as follows. Catalyzes the covalent attachment of ubiquitin to other proteins. This chain is Probable ubiquitin-conjugating enzyme E2 L709, found in Acanthamoeba polyphaga (Amoeba).